The following is a 330-amino-acid chain: 3',5'-cyclic-nucleotide phosphodiesterase (330 aa).

Positions 1 to 22 (MFKNKLAVLFTCLSVFSFSAQS) are cleaved as a signal peptide.

It belongs to the cyclic nucleotide phosphodiesterase class-II family.

The protein resides in the periplasm. It carries out the reaction a nucleoside 3',5'-cyclic phosphate + H2O = a nucleoside 5'-phosphate + H(+). Seems to allow the organism to grow on cAMP. The protein is 3',5'-cyclic-nucleotide phosphodiesterase (cpdP) of Aliivibrio fischeri (Vibrio fischeri).